The following is a 166-amino-acid chain: Small ribosomal subunit protein uS5 (166 aa).

The 64-residue stretch at 11-74 (LIEKLITVNR…EKARRNMVTV (64 aa)) folds into the S5 DRBM domain.

It belongs to the universal ribosomal protein uS5 family. Part of the 30S ribosomal subunit. Contacts proteins S4 and S8.

In terms of biological role, with S4 and S12 plays an important role in translational accuracy. Its function is as follows. Located at the back of the 30S subunit body where it stabilizes the conformation of the head with respect to the body. This is Small ribosomal subunit protein uS5 from Idiomarina loihiensis (strain ATCC BAA-735 / DSM 15497 / L2-TR).